We begin with the raw amino-acid sequence, 312 residues long: Ribosomal RNA small subunit methyltransferase H (312 aa).

Residues 32–34, aspartate 52, phenylalanine 79, aspartate 100, and glutamine 107 contribute to the S-adenosyl-L-methionine site; that span reads AGH.

This sequence belongs to the methyltransferase superfamily. RsmH family.

It is found in the cytoplasm. The catalysed reaction is cytidine(1402) in 16S rRNA + S-adenosyl-L-methionine = N(4)-methylcytidine(1402) in 16S rRNA + S-adenosyl-L-homocysteine + H(+). In terms of biological role, specifically methylates the N4 position of cytidine in position 1402 (C1402) of 16S rRNA. This is Ribosomal RNA small subunit methyltransferase H from Listeria monocytogenes serovar 1/2a (strain ATCC BAA-679 / EGD-e).